We begin with the raw amino-acid sequence, 592 residues long: Tetrathionate sensor histidine kinase TtrS (592 aa).

2 helical membrane passes run 11–31 (VLAA…NIGI) and 307–327 (VGGV…VMLL). The Histidine kinase domain maps to 364-581 (GFAHELNQPL…VVTIHFLHEN (218 aa)). At H367 the chain carries Phosphohistidine; by autocatalysis.

In terms of processing, autophosphorylated.

It is found in the cell inner membrane. It carries out the reaction ATP + protein L-histidine = ADP + protein N-phospho-L-histidine.. Member of the two-component regulatory system TtrR/TtrS, which is required for synthesis of tetrathionate reductase. Probably functions as a sensor protein kinase which is autophosphorylated at a histidine residue in response to tetrathionate, and transfers its phosphate group to TtrR. During mice infection, the ability to use tetrathionate as an electron acceptor is a growth advantage for S.typhimurium over the competing microbiota in the lumen of the inflamed gut. The sequence is that of Tetrathionate sensor histidine kinase TtrS (ttrS) from Salmonella typhimurium (strain LT2 / SGSC1412 / ATCC 700720).